A 552-amino-acid polypeptide reads, in one-letter code: Urocanate hydratase (552 aa).

NAD(+) is bound by residues 49 to 50 (GG), glutamine 127, 173 to 175 (GMG), aspartate 193, 239 to 240 (NA), 260 to 264 (QTSAH), 270 to 271 (YV), and tyrosine 319. The active site involves cysteine 407. Glycine 489 is an NAD(+) binding site.

Belongs to the urocanase family. The cofactor is NAD(+).

It is found in the cytoplasm. It catalyses the reaction 4-imidazolone-5-propanoate = trans-urocanate + H2O. It functions in the pathway amino-acid degradation; L-histidine degradation into L-glutamate; N-formimidoyl-L-glutamate from L-histidine: step 2/3. Catalyzes the conversion of urocanate to 4-imidazolone-5-propionate. This Bacillus cytotoxicus (strain DSM 22905 / CIP 110041 / 391-98 / NVH 391-98) protein is Urocanate hydratase.